We begin with the raw amino-acid sequence, 441 residues long: Tol-Pal system protein TolB (441 aa).

Positions 1-25 (MRIFFFAYVLPTVISLLLGCQGAIA) are cleaved as a signal peptide.

Belongs to the TolB family. In terms of assembly, the Tol-Pal system is composed of five core proteins: the inner membrane proteins TolA, TolQ and TolR, the periplasmic protein TolB and the outer membrane protein Pal. They form a network linking the inner and outer membranes and the peptidoglycan layer.

Its subcellular location is the periplasm. Functionally, part of the Tol-Pal system, which plays a role in outer membrane invagination during cell division and is important for maintaining outer membrane integrity. The sequence is that of Tol-Pal system protein TolB from Anaplasma marginale (strain St. Maries).